A 230-amino-acid chain; its full sequence is Complex I assembly factor TMEM126B, mitochondrial (230 aa).

A Phosphoserine modification is found at Ser34. The next 4 helical transmembrane spans lie at 72-92, 110-130, 141-161, and 199-219; these read IYQM…SNFL, LATL…IDAL, VFRS…SLAF, and IPLV…YAVF.

Belongs to the TMEM126 family. As to quaternary structure, part of the mitochondrial complex I assembly/MCIA complex that comprises at least the core subunits TMEM126B, NDUFAF1, ECSIT and ACAD9 and complement subunits such as COA1 and TMEM186. Associates with the intermediate 370 kDa subcomplex of incompletely assembled complex I. Interacts with TMEM70.

The protein resides in the mitochondrion membrane. In terms of biological role, as part of the MCIA complex, involved in the assembly of the mitochondrial complex I. Participates in constructing the membrane arm of complex I. In Homo sapiens (Human), this protein is Complex I assembly factor TMEM126B, mitochondrial.